A 430-amino-acid polypeptide reads, in one-letter code: uncharacterized protein (430 aa).

The next 2 helical transmembrane spans lie at 20-40 (YLCLVFLAVYYAYPLLFGIMP) and 405-425 (YIWWALHISVCVLTILRLLVI).

Its subcellular location is the membrane. This is an uncharacterized protein from Schizosaccharomyces pombe (strain 972 / ATCC 24843) (Fission yeast).